The primary structure comprises 56 residues: MQTNRVILLAVMICLVSAITVFLLNGCKVDFLDIGGTIIGCFLGIFVVVRIQKKQS.

The next 2 helical transmembrane spans lie at 6–26 and 29–49; these read VILLAVMICLVSAITVFLLNG and VDFLDIGGTIIGCFLGIFVVV.

The protein localises to the cell membrane. This is an uncharacterized protein from Bacillus subtilis (strain 168).